Consider the following 463-residue polypeptide: Serine carboxypeptidase-like 32 (463 aa).

A signal peptide spans 1–22 (MMNISNVSIALYLCTLFAFVSS). 3 disulfide bridges follow: Cys-86/Cys-345, Cys-249/Cys-262, and Cys-286/Cys-313. The N-linked (GlcNAc...) asparagine glycan is linked to Asn-137. Ser-179 is a catalytic residue. N-linked (GlcNAc...) asparagine glycans are attached at residues Asn-201 and Asn-250. 2 N-linked (GlcNAc...) asparagine glycosylation sites follow: Asn-341 and Asn-354. Active-site residues include Asp-384 and His-436.

This sequence belongs to the peptidase S10 family. In terms of tissue distribution, expressed in flowers.

Its subcellular location is the secreted. Functionally, probable carboxypeptidase. The polypeptide is Serine carboxypeptidase-like 32 (SCPL32) (Arabidopsis thaliana (Mouse-ear cress)).